The sequence spans 253 residues: Transposase for insertion sequence element IS904 (253 aa).

In terms of domain architecture, Integrase catalytic spans 90-253 (KATAPNKVWL…SPKDFEKYNS (164 aa)).

Belongs to the transposase IS3/IS150/IS904 family.

Involved in the transposition of the insertion sequence. The protein is Transposase for insertion sequence element IS904 (nisX1) of Lactococcus lactis subsp. lactis (strain IL1403) (Streptococcus lactis).